A 49-amino-acid polypeptide reads, in one-letter code: Small ribosomal subunit protein uS19c (49 aa).

Belongs to the universal ribosomal protein uS19 family.

It localises to the plastid. It is found in the chloroplast. Protein S19 forms a complex with S13 that binds strongly to the 16S ribosomal RNA. The chain is Small ribosomal subunit protein uS19c (rps19) from Sinapis alba (White mustard).